A 198-amino-acid polypeptide reads, in one-letter code: Phosphoheptose isomerase (198 aa).

Residues 34–196 (IVEALIRGNK…DDSLFPADHG (163 aa)) form the SIS domain. A substrate-binding site is contributed by 49 to 51 (NGG). Zn(2+) contacts are provided by His-58 and Asn-62. Residues Asn-62, 91-92 (ND), 117-119 (STS), Ser-122, and Gln-172 each bind substrate. Positions 172 and 180 each coordinate Zn(2+).

The protein belongs to the SIS family. GmhA subfamily. In terms of assembly, homotetramer. It depends on Zn(2+) as a cofactor.

Its subcellular location is the cytoplasm. The enzyme catalyses 2 D-sedoheptulose 7-phosphate = D-glycero-alpha-D-manno-heptose 7-phosphate + D-glycero-beta-D-manno-heptose 7-phosphate. Its pathway is carbohydrate biosynthesis; D-glycero-D-manno-heptose 7-phosphate biosynthesis; D-glycero-alpha-D-manno-heptose 7-phosphate and D-glycero-beta-D-manno-heptose 7-phosphate from sedoheptulose 7-phosphate: step 1/1. In terms of biological role, catalyzes the isomerization of sedoheptulose 7-phosphate in D-glycero-D-manno-heptose 7-phosphate. The sequence is that of Phosphoheptose isomerase from Alteromonas mediterranea (strain DSM 17117 / CIP 110805 / LMG 28347 / Deep ecotype).